Consider the following 1342-residue polypeptide: DNA-directed RNA polymerase subunit beta (1342 aa).

It belongs to the RNA polymerase beta chain family. The RNAP catalytic core consists of 2 alpha, 1 beta, 1 beta' and 1 omega subunit. When a sigma factor is associated with the core the holoenzyme is formed, which can initiate transcription.

The catalysed reaction is RNA(n) + a ribonucleoside 5'-triphosphate = RNA(n+1) + diphosphate. Functionally, DNA-dependent RNA polymerase catalyzes the transcription of DNA into RNA using the four ribonucleoside triphosphates as substrates. This Erwinia tasmaniensis (strain DSM 17950 / CFBP 7177 / CIP 109463 / NCPPB 4357 / Et1/99) protein is DNA-directed RNA polymerase subunit beta.